An 852-amino-acid polypeptide reads, in one-letter code: Bifunctional uridylyltransferase/uridylyl-removing enzyme (852 aa).

Residues 1–318 (MPENLSSALE…STPMRVTLRI (318 aa)) form a uridylyltransferase region. Residues 319-672 (DDDYIQVNNQ…SRILPQSDSF (354 aa)) form a uridylyl-removing region. The region spanning 436–558 (VDDHILAVVR…VQTHERLSAL (123 aa)) is the HD domain. 2 consecutive ACT domains span residues 673–757 (QVMV…SCNR) and 785–852 (SVEI…EQLA).

This sequence belongs to the GlnD family. It depends on Mg(2+) as a cofactor.

It catalyses the reaction [protein-PII]-L-tyrosine + UTP = [protein-PII]-uridylyl-L-tyrosine + diphosphate. The enzyme catalyses [protein-PII]-uridylyl-L-tyrosine + H2O = [protein-PII]-L-tyrosine + UMP + H(+). Its activity is regulated as follows. Uridylyltransferase (UTase) activity is inhibited by glutamine, while glutamine activates uridylyl-removing (UR) activity. In terms of biological role, modifies, by uridylylation and deuridylylation, the PII regulatory proteins (GlnB and homologs), in response to the nitrogen status of the cell that GlnD senses through the glutamine level. Under low glutamine levels, catalyzes the conversion of the PII proteins and UTP to PII-UMP and PPi, while under higher glutamine levels, GlnD hydrolyzes PII-UMP to PII and UMP (deuridylylation). Thus, controls uridylylation state and activity of the PII proteins, and plays an important role in the regulation of nitrogen assimilation and metabolism. The polypeptide is Bifunctional uridylyltransferase/uridylyl-removing enzyme (Neisseria gonorrhoeae (strain NCCP11945)).